We begin with the raw amino-acid sequence, 393 residues long: Upstream-binding factor 1-like protein 1 (393 aa).

2 DNA-binding regions (HMG box) span residues 100–168 (PKRP…ARFR) and 222–288 (QKPP…DLWL). The tract at residues 308–393 (KNMAMTGGPD…SSGEEIEVDV (86 aa)) is disordered. The span at 365–377 (EENRKKDREKEES) shows a compositional bias: basic and acidic residues.

It localises to the cytoplasm. It is found in the nucleus. In terms of biological role, essential for proliferation of the inner cell mass and trophectodermal cells in peri-implantation development. This Homo sapiens (Human) protein is Upstream-binding factor 1-like protein 1.